The sequence spans 256 residues: Fat body protein 2 (256 aa).

Residue 10–34 (VYVGSFSGIGWQMMMQLMQKDIKMM) coordinates NAD(+). Serine 138 lines the substrate pocket. Catalysis depends on tyrosine 151, which acts as the Proton acceptor.

The protein belongs to the short-chain dehydrogenases/reductases (SDR) family.

The protein is Fat body protein 2 (Fbp2) of Drosophila melanogaster (Fruit fly).